The chain runs to 249 residues: tRNA pseudouridine synthase A (249 aa).

The active-site Nucleophile is the D53. Y111 lines the substrate pocket.

This sequence belongs to the tRNA pseudouridine synthase TruA family. In terms of assembly, homodimer.

The enzyme catalyses uridine(38/39/40) in tRNA = pseudouridine(38/39/40) in tRNA. Formation of pseudouridine at positions 38, 39 and 40 in the anticodon stem and loop of transfer RNAs. The sequence is that of tRNA pseudouridine synthase A from Streptococcus sanguinis (strain SK36).